Reading from the N-terminus, the 221-residue chain is NEDD4 family-interacting protein 1 (221 aa).

A2 bears the N-acetylalanine mark. The tract at residues 2-41 is interaction with UBE2L3; the sequence is ALALAALAAVEPACGTGYQQLQNEEEPGEREQTAGDAPPP. The Cytoplasmic portion of the chain corresponds to 2-116; that stretch reads ALALAALAAV…ADQLRIGNDG (115 aa). Residues 15–45 are disordered; it reads CGTGYQQLQNEEEPGEREQTAGDAPPPYSSI. 3 short sequence motifs (PPxY motif) span residues 39–42, 64–67, and 74–76; these read PPPY, PPSY, and PSY. The interval 42–76 is interaction with ITCH; sequence YSSISAESAAYFDYKDESGFPKPPSYNVATTLPSY. The helical transmembrane segment at 117–137 threads the bilayer; the sequence is IFMLTFFMAFLFNWIGFFLSF. At 138-143 the chain is on the extracellular side; that stretch reads CLTTSA. The helical transmembrane segment at 144–164 threads the bilayer; sequence AGRYGAISGFGLSLIKWILIV. Residues 165-172 are Cytoplasmic-facing; it reads RFSTYFPG. The helical transmembrane segment at 173 to 193 threads the bilayer; that stretch reads YFDGQYWLWWVFLVLGFLLFL. The Extracellular segment spans residues 194-221; that stretch reads RGFINYAKVRKMPETFSNLPRTRVLFIY.

In terms of assembly, forms heterodimers with NDFIP2. Interacts with several E3 ubiquitin-protein ligases, including ITCH, NEDD4, NEDD4L and WWP2. The interaction with NEDD4, NEDD4L and ITCH leads to relocalization of these proteins to exosomes and eventually to exosomal secretion. Interacts with SR1402. Interacts with SLC11A2/DMT1. Interacts with PTEN. May interact with phosphorylated EGFR. Interacts with BRAT1. Interacts with KCNH2. Interacts with MAVS. Part of a complex containing ITCH, NDFIP1 and MAP3K7. Interacts (via N-terminus) with UBE2L3; the interaction mediates recruitment of UBE2L3 to ITCH. Post-translationally, ubiquitinated by NEDD4; mono-, di- and polyubiquitinated forms are detected. Ubiquitination regulates its degradation. Undergoes transient tyrosine phosphorylation following EGF stimulation, most probably by catalyzed by SRC. Phosphorylation SRC is enhanced in the presence of NDFIP2 which may act as a scaffold to recruit SRC to NDFIP1.

The protein resides in the endosome membrane. Its subcellular location is the golgi apparatus membrane. It localises to the synapse. It is found in the synaptosome. The protein localises to the cell projection. The protein resides in the dendrite. Its subcellular location is the secreted. Its function is as follows. Activates HECT domain-containing E3 ubiquitin-protein ligases, including NEDD4 and ITCH, and consequently modulates the stability of their targets. As a result, controls many cellular processes. Prevents chronic T-helper cell-mediated inflammation by activating ITCH and thus controlling JUNB degradation. Promotes pancreatic beta cell death through degradation of JUNB and inhibition of the unfolded protein response, leading to reduction of insulin secretion. Restricts the production of pro-inflammatory cytokines in effector Th17 T-cells by promoting ITCH-mediated ubiquitination degradation of RORC. Together with NDFIP2, limits the cytokine signaling and expansion of effector Th2 T-cells by promoting degradation of JAK1, probably by ITCH- and NEDD4L-mediated ubiquitination. Regulates peripheral T-cell tolerance to self and foreign antigens, forcing the exit of naive CD4+ T-cells from the cell cycle before they become effector T-cells. Negatively regulates RLR-mediated antiviral response by promoting SMURF1-mediated ubiquitination and subsequent degradation of MAVS. Negatively regulates KCNH2 potassium channel activity by decreasing its cell-surface expression and interfering with channel maturation through recruitment of NEDD4L to the Golgi apparatus where it mediates KCNH2 degradation. In cortical neurons, mediates the ubiquitination of the divalent metal transporter SLC11A2/DMT1 by NEDD4L, leading to its down-regulation and protection of the cells from cobalt and iron toxicity. Important for normal development of dendrites and dendritic spines in cortex. Enhances the ubiquitination of BRAT1 mediated by: NEDD4, NEDD4L and ITCH and is required for the nuclear localization of ubiquitinated BRAT1. Enhances the ITCH-mediated ubiquitination of MAP3K7 by recruiting E2 ubiquitin-conjugating enzyme UBE2L3 to ITCH. Modulates EGFR signaling through multiple pathways. In particular, may regulate the ratio of AKT1-to-MAPK8 signaling in response to EGF, acting on AKT1 probably through PTEN destabilization and on MAPK8 through ITCH-dependent MAP2K4 inactivation. As a result, may control cell growth rate. Inhibits cell proliferation by promoting PTEN nuclear localization and changing its signaling specificity. The polypeptide is NEDD4 family-interacting protein 1 (Ndfip1) (Rattus norvegicus (Rat)).